A 401-amino-acid chain; its full sequence is Nodal homolog 3-B (401 aa).

The first 18 residues, 1–18 (MALLNLFFCLVFSSPLMA), serve as a signal peptide directing secretion. Residues 19-274 (MPPVLQGRKS…KVNGFRRLRR (256 aa)) constitute a propeptide that is removed on maturation. N-linked (GlcNAc...) asparagine glycans are attached at residues Asn-168, Asn-337, Asn-341, and Asn-344. Disulfide bonds link Cys-299-Cys-365 and Cys-328-Cys-396.

This sequence belongs to the TGF-beta family. As to quaternary structure, monomer. The propeptide region interacts with bmp4 in a non-covalent manner. As to expression, expressed in the dorsal marginal region of late blastula, becoming restricted to the dorsal blastopore lip (Spemann organizer) at the early gastrula stage.

Its subcellular location is the secreted. Functionally, exhibits mesoderm-dorsalizing activity and neural-inducing activity, but lacks mesoderm-inducing activity. Regulates the expression of specific mesodermal and neural genes. Induces convergent extension movements at the embryonic midline by activating the fgf signaling pathway to induce t/bra expression in the organizer region. Acts with wnt11 to induce Spemann organizer cells and induce axis formation. The unprocessed protein antagonizes bmp-signaling. In Xenopus laevis (African clawed frog), this protein is Nodal homolog 3-B (nodal3-b).